We begin with the raw amino-acid sequence, 322 residues long: Biotin synthase (322 aa).

The 228-residue stretch at 39–266 (NQVQISSLLN…KSVVRLSAGR (228 aa)) folds into the Radical SAM core domain. Residues Cys-54, Cys-58, and Cys-61 each contribute to the [4Fe-4S] cluster site. 4 residues coordinate [2Fe-2S] cluster: Cys-98, Cys-129, Cys-189, and Arg-261.

Belongs to the radical SAM superfamily. Biotin synthase family. Homodimer. [4Fe-4S] cluster serves as cofactor. Requires [2Fe-2S] cluster as cofactor.

It carries out the reaction (4R,5S)-dethiobiotin + (sulfur carrier)-SH + 2 reduced [2Fe-2S]-[ferredoxin] + 2 S-adenosyl-L-methionine = (sulfur carrier)-H + biotin + 2 5'-deoxyadenosine + 2 L-methionine + 2 oxidized [2Fe-2S]-[ferredoxin]. Its pathway is cofactor biosynthesis; biotin biosynthesis; biotin from 7,8-diaminononanoate: step 2/2. Its function is as follows. Catalyzes the conversion of dethiobiotin (DTB) to biotin by the insertion of a sulfur atom into dethiobiotin via a radical-based mechanism. The chain is Biotin synthase from Vesicomyosocius okutanii subsp. Calyptogena okutanii (strain HA).